A 338-amino-acid polypeptide reads, in one-letter code: 1-aminocyclopropane-1-carboxylate deaminase (338 aa).

An N6-(pyridoxal phosphate)lysine modification is found at K51. Catalysis depends on S78, which acts as the Nucleophile.

Belongs to the ACC deaminase/D-cysteine desulfhydrase family. In terms of assembly, homotrimer. The cofactor is pyridoxal 5'-phosphate.

The catalysed reaction is 1-aminocyclopropane-1-carboxylate + H2O = 2-oxobutanoate + NH4(+). In terms of biological role, catalyzes a cyclopropane ring-opening reaction, the irreversible conversion of 1-aminocyclopropane-1-carboxylate (ACC) to ammonia and alpha-ketobutyrate. Allows growth on ACC as a nitrogen source. In Pseudomonas syringae pv. syringae (strain B728a), this protein is 1-aminocyclopropane-1-carboxylate deaminase.